The primary structure comprises 563 residues: Tripeptidyl-peptidase 1 (563 aa).

Residues 1–19 (MGLQACLLGLFALILSGKC) form the signal peptide. Residues 20–195 (SYSPEPDQRR…PEPQVTGTVG (176 aa)) constitute a propeptide, removed in mature form. Cysteine 111 and cysteine 122 are disulfide-bonded. In terms of domain architecture, Peptidase S53 spans 199–563 (GVTPSVIRKR…PALLKTLLNP (365 aa)). 2 N-linked (GlcNAc...) asparagine glycosylation sites follow: asparagine 210 and asparagine 222. Active-site charge relay system residues include glutamate 272 and aspartate 276. 3 N-linked (GlcNAc...) asparagine glycosylation sites follow: asparagine 286, asparagine 313, and asparagine 443. 2 cysteine pairs are disulfide-bonded: cysteine 365–cysteine 526 and cysteine 522–cysteine 537. The Charge relay system role is filled by serine 475. Aspartate 517 and valine 518 together coordinate Ca(2+). The Ca(2+) site is built by glycine 539, glycine 541, and aspartate 543.

As to quaternary structure, monomer. Interacts with CLN5. Interacts with CLN3. Ca(2+) is required as a cofactor. In terms of processing, activated by autocatalytic proteolytical processing upon acidification. N-glycosylation is required for processing and activity.

The protein localises to the lysosome. The protein resides in the melanosome. It carries out the reaction Release of an N-terminal tripeptide from a polypeptide, but also has endopeptidase activity.. Its function is as follows. Lysosomal serine protease with tripeptidyl-peptidase I activity. May act as a non-specific lysosomal peptidase which generates tripeptides from the breakdown products produced by lysosomal proteinases. Requires substrates with an unsubstituted N-terminus. The chain is Tripeptidyl-peptidase 1 (TPP1) from Pan troglodytes (Chimpanzee).